A 676-amino-acid polypeptide reads, in one-letter code: Capsid vertex component 1 (676 aa).

Low complexity predominate over residues 253–264 (HPVRPSSSRVAS). The tract at residues 253–308 (HPVRPSSSRVASGLLQSAKGHGAQTSNTDPINNGSFDGVLEPPGQGRFTGKKNNSS) is disordered. The span at 275 to 287 (AQTSNTDPINNGS) shows a compositional bias: polar residues.

The protein belongs to the herpesviridae CVC1 protein family. Interacts (via C-terminus) with capsid vertex component 2/CVC2.

The protein localises to the virion. It localises to the host nucleus. In terms of biological role, capsid vertex-specific component that plays a role during viral DNA encapsidation, assuring correct genome cleavage and presumably stabilizing capsids that contain full-length viral genomes. This is Capsid vertex component 1 from Varicella-zoster virus (strain Dumas) (HHV-3).